The sequence spans 538 residues: Xylosidase/arabinosidase 43B (538 aa).

The active-site Proton donor is the glutamate 367.

It belongs to the glycosyl hydrolase 43 family.

The enzyme catalyses Hydrolysis of (1-&gt;4)-beta-D-xylans, to remove successive D-xylose residues from the non-reducing termini.. It carries out the reaction Hydrolysis of terminal non-reducing alpha-L-arabinofuranoside residues in alpha-L-arabinosides.. With respect to regulation, activity is inhibited by Ag(+), Li(+), Cu(2+), Cr(3+), Co(3+), Ni(2+), Mg(2+), Zn(2+), EDTA, SDS and beta-mercaptoethanol; but not by Mn(2+), Pb(2+), Ca(2+) and Fe(3+). Functionally, bifunctional beta-xylosidase/alpha-L-arabinosidases with a low level of xylanase activity. Is most active on 4-nitrophenyl beta-D-xylopyranoside (pNPX) (defined as 100%), moderate on p-nitrophenyl-alpha-L-arabinofuranoside (pNPA) (56.6%), and weak on beechwood xylan (5.7%) and birchwood xylan (2.7%). Is able to attack xylooligosacchardies with degrees of polymerisation of 2-5, releasing the amounts of reducing sugars in the order of xylopentose &gt; xylotetraose &gt; xylotriose &gt; xylobiose, i.e. the rate of xylose released from xylooligosacchardies increased with the chain length. No activity was detected in the presence of carboxymethyl cellulose-sodium (CMC-Na), sugar beet arabinan, AZCL-arabinan (debranched), 4-nitrophenyl a-D - galactopyranoside, 2-nitrophenyl beta-D-galactopyranoside, and 4-nitrophenyl alpha-D-glucopyranoside. This is Xylosidase/arabinosidase 43B from Humicola insolens (Soft-rot fungus).